Reading from the N-terminus, the 199-residue chain is Recombination protein RecR (199 aa).

The segment at 58-73 (CVRCGNITNADLCGIC) adopts a C4-type zinc-finger fold. In terms of domain architecture, Toprim spans 81 to 176 (GELCVVEDVA…QVTSLAQGVP (96 aa)).

The protein belongs to the RecR family.

Functionally, may play a role in DNA repair. It seems to be involved in an RecBC-independent recombinational process of DNA repair. It may act with RecF and RecO. The protein is Recombination protein RecR of Cereibacter sphaeroides (strain ATCC 17029 / ATH 2.4.9) (Rhodobacter sphaeroides).